Consider the following 195-residue polypeptide: Probable thymidylate kinase (195 aa).

7-14 (GIDGVGKT) contributes to the ATP binding site.

The protein belongs to the thymidylate kinase family.

The catalysed reaction is dTMP + ATP = dTDP + ADP. The chain is Probable thymidylate kinase from Methanosphaera stadtmanae (strain ATCC 43021 / DSM 3091 / JCM 11832 / MCB-3).